Here is a 330-residue protein sequence, read N- to C-terminus: Ferredoxin--NADP reductase (330 aa).

FAD is bound by residues threonine 19, aspartate 38, glutamine 46, tyrosine 51, alanine 91, phenylalanine 129, aspartate 286, and serine 327.

The protein belongs to the ferredoxin--NADP reductase type 2 family. Homodimer. Requires FAD as cofactor.

It catalyses the reaction 2 reduced [2Fe-2S]-[ferredoxin] + NADP(+) + H(+) = 2 oxidized [2Fe-2S]-[ferredoxin] + NADPH. The polypeptide is Ferredoxin--NADP reductase (Nocardioides sp. (strain ATCC BAA-499 / JS614)).